The primary structure comprises 558 residues: Dihydroxy-acid dehydratase (558 aa).

Residue Cys-54 participates in [2Fe-2S] cluster binding. Residue Asp-86 coordinates Mg(2+). A [2Fe-2S] cluster-binding site is contributed by Cys-127. Mg(2+) is bound by residues Asp-128 and Lys-129. Lys-129 bears the N6-carboxylysine mark. Cys-199 contributes to the [2Fe-2S] cluster binding site. Glu-448 serves as a coordination point for Mg(2+). Ser-474 serves as the catalytic Proton acceptor.

It belongs to the IlvD/Edd family. In terms of assembly, homodimer. [2Fe-2S] cluster serves as cofactor. Requires Mg(2+) as cofactor.

It catalyses the reaction (2R)-2,3-dihydroxy-3-methylbutanoate = 3-methyl-2-oxobutanoate + H2O. The catalysed reaction is (2R,3R)-2,3-dihydroxy-3-methylpentanoate = (S)-3-methyl-2-oxopentanoate + H2O. It participates in amino-acid biosynthesis; L-isoleucine biosynthesis; L-isoleucine from 2-oxobutanoate: step 3/4. The protein operates within amino-acid biosynthesis; L-valine biosynthesis; L-valine from pyruvate: step 3/4. In terms of biological role, functions in the biosynthesis of branched-chain amino acids. Catalyzes the dehydration of (2R,3R)-2,3-dihydroxy-3-methylpentanoate (2,3-dihydroxy-3-methylvalerate) into 2-oxo-3-methylpentanoate (2-oxo-3-methylvalerate) and of (2R)-2,3-dihydroxy-3-methylbutanoate (2,3-dihydroxyisovalerate) into 2-oxo-3-methylbutanoate (2-oxoisovalerate), the penultimate precursor to L-isoleucine and L-valine, respectively. This Acidothermus cellulolyticus (strain ATCC 43068 / DSM 8971 / 11B) protein is Dihydroxy-acid dehydratase.